Here is a 152-residue protein sequence, read N- to C-terminus: Cytochrome c-type biogenesis CcmH-like mitochondrial protein (152 aa).

Residues 1 to 83 are Mitochondrial intermembrane-facing; sequence MATEEDVKQR…ILYTPKFDLQ (83 aa). 2 residues coordinate heme: C26 and C29. A helical membrane pass occupies residues 84 to 104; the sequence is TAAIWLSPVIVGGVAAGVWAY. Residues 105 to 152 are Mitochondrial matrix-facing; that stretch reads QKHRQRTNVHIMALNLVRGVPLTPREKETMLDVLTPPPPANKWWWPGK.

This sequence belongs to the CcmH/CycL/Ccl2/NrfF family.

Its subcellular location is the mitochondrion inner membrane. In terms of biological role, plays a role in mitochondrial cytochrome c maturation. Probable component of a heme lyase complex involved in the reduction of apocytochrome c. This Oryza sativa subsp. japonica (Rice) protein is Cytochrome c-type biogenesis CcmH-like mitochondrial protein.